The sequence spans 205 residues: Heme ligase (205 aa).

Residues 48 to 203 (KRTIINLIYS…GVVHIVDKPI (156 aa)) form the FAS1 domain. Residues 154-172 (LRNLLNNDLIVKIEGEFKH) form a required for binding to host hemoglobin region. Heme binding domain regions lie at residues 171 to 181 (KHCNHSIYLNG) and 191 to 200 (CHNGVVHIVD).

In terms of assembly, component of the hemozoin formation complex (HFC) composed of falcipains FP2A and/or FP2B, plasmepsins PMII, PMIII/HAP and PMIV, heme detoxifying protein HDP and falcilysin FLN. The HFC complex is involved in hemoglobin degradation and detoxification of heme in the food vacuole during the asexual blood stage. Interacts with falcipain 2; the interaction is direct and enhances HDP catalytic activity. Interacts with host hemoglobin.

It is found in the vacuole. Its subcellular location is the host cytoplasm. The protein localises to the host cytosol. It carries out the reaction 2 Fe(III)-heme b = beta-hematin. Heme detoxifying enzyme that converts heme to crystalline hemozoin (beta-hematin) to protect the organism from the toxic effects of heme. During its development, P.falciparum proteolyzes vast amounts of host hemoglobin, leading to heme release. The chain is Heme ligase from Plasmodium falciparum (isolate 3D7).